A 269-amino-acid chain; its full sequence is Myelin protein zero-like protein 1 (269 aa).

A signal peptide spans 1–35; sequence MAASAGAGAVIAAPDSRRWLWSVLAAALGLLTAGV. Positions 36 to 146 constitute an Ig-like V-type domain; the sequence is SALEVYTPKE…VKNPPDIVVQ (111 aa). The Extracellular portion of the chain corresponds to 36-162; it reads SALEVYTPKE…YVVEKENLPV (127 aa). Asn-50 and Asn-130 each carry an N-linked (GlcNAc...) asparagine glycan. A disulfide bond links Cys-58 and Cys-135. A helical transmembrane segment spans residues 163-183; sequence FPVWVVVGIVTAVVLGLTLLI. Topologically, residues 184 to 269 are cytoplasmic; sequence SMILAVLYRR…SVVYADIRKN (86 aa). The segment at 199 to 238 is disordered; that stretch reads DYTGCSTSESLSPVKQAPRKSPSDTEGLVKSLPSGSHQGP. Polar residues predominate over residues 202-211; that stretch reads GCSTSESLSP. A phosphoserine mark is found at Ser-204, Ser-206, Ser-208, Ser-210, Ser-219, and Ser-221. Residues 239–244 carry the ITIM motif 1 motif; it reads VIYAQL. Tyr-241 is modified (phosphotyrosine). Ser-260 carries the phosphoserine modification. The ITIM motif 2 motif lies at 261–266; that stretch reads VVYADI. Tyr-263 carries the phosphotyrosine modification.

The protein belongs to the myelin P0 protein family. As to quaternary structure, interacts with phosphorylated PTPN11/SHP-2. In terms of processing, phosphorylated on tyrosine residues upon stimulation with pervanadate and concanavalin-A (ConA). Phosphorylation at Tyr-241 and Tyr-263 is required for interaction with PTPN11/SHP-2. Dephosphorylated by PTPN11/SHP-2 (in vitro). Post-translationally, N-glycosylated. N-glycosylation is required for concanavalin A binding. As to expression, widely expressed with highest levels in heart, placenta, kidney and pancreas. Isoform 3 is relatively abundant in hematopoietic tissues and fetal liver. Isoform 1 and isoform 3 are expressed in CD14- PB monocytes and pre-B cell progenitors. Isoform 3 appears to be the major isoform in CD34- promyelocytic and promonocytic cells. During differentiation in monocytic cells, the expression level of isoform 3 decreases and that of isoform 1 increases. Isoform 1 is prominent in stromal cells and, to a lesser extent, in umbilical vein endothelial cells and erythroid progenitors. Isoform 2 is expressed in a erythroid progenitor cell line.

It is found in the membrane. Its function is as follows. Cell surface receptor, which is involved in signal transduction processes. Recruits PTPN11/SHP-2 to the cell membrane and is a putative substrate of PTPN11/SHP-2. Is a major receptor for concanavalin-A (ConA) and is involved in cellular signaling induced by ConA, which probably includes Src family tyrosine-protein kinases. Isoform 3 seems to have a dominant negative role; it blocks tyrosine phosphorylation of MPZL1 induced by ConA. Isoform 1, but not isoform 2 and isoform 3, may be involved in regulation of integrin-mediated cell motility. In Homo sapiens (Human), this protein is Myelin protein zero-like protein 1 (MPZL1).